Reading from the N-terminus, the 223-residue chain is Protein DEHYDRATION-INDUCED 19 homolog 3 (223 aa).

Thr114 is modified (phosphothreonine). Phosphoserine is present on Ser116.

This sequence belongs to the Di19 family. Phosphorylated in vitro by CPK3 or CPK11. In terms of tissue distribution, expressed in seedlings, roots, leaves, stems, flowers and siliques.

The protein resides in the nucleus. The sequence is that of Protein DEHYDRATION-INDUCED 19 homolog 3 (DI19-3) from Arabidopsis thaliana (Mouse-ear cress).